We begin with the raw amino-acid sequence, 115 residues long: Regulator of ribonuclease activity B (115 aa).

Belongs to the RraB family. Interacts with the C-terminal region of Rne.

The protein resides in the cytoplasm. Globally modulates RNA abundance by binding to RNase E (Rne) and regulating its endonucleolytic activity. Can modulate Rne action in a substrate-dependent manner by altering the composition of the degradosome. The chain is Regulator of ribonuclease activity B from Aeromonas salmonicida (strain A449).